Consider the following 469-residue polypeptide: UDP-N-acetylmuramoylalanine--D-glutamate ligase (469 aa).

123–129 (GTNGKST) contacts ATP.

The protein belongs to the MurCDEF family.

It is found in the cytoplasm. It carries out the reaction UDP-N-acetyl-alpha-D-muramoyl-L-alanine + D-glutamate + ATP = UDP-N-acetyl-alpha-D-muramoyl-L-alanyl-D-glutamate + ADP + phosphate + H(+). Its pathway is cell wall biogenesis; peptidoglycan biosynthesis. In terms of biological role, cell wall formation. Catalyzes the addition of glutamate to the nucleotide precursor UDP-N-acetylmuramoyl-L-alanine (UMA). In Phenylobacterium zucineum (strain HLK1), this protein is UDP-N-acetylmuramoylalanine--D-glutamate ligase.